The sequence spans 217 residues: Adenylate kinase (217 aa).

10–15 is a binding site for ATP; it reads GAGKGT. The tract at residues 30-59 is NMP; it reads STGDMFRAAMKEGTPLGLQAKEYIDRGDLV. AMP contacts are provided by residues Thr-31, Arg-36, 57–59, 85–88, and Gln-92; these read DLV and GFPR. The interval 126–163 is LID; it reads GRRICRNCGATYHLVFHPPAQPGVCDKCGGELYQRPDD. ATP is bound at residue Arg-127. Zn(2+)-binding residues include Cys-130 and Cys-133. 136–137 is a binding site for ATP; that stretch reads TY. 2 residues coordinate Zn(2+): Cys-150 and Cys-153. Residues Arg-160 and Arg-171 each coordinate AMP. An ATP-binding site is contributed by Gln-199.

The protein belongs to the adenylate kinase family. As to quaternary structure, monomer.

It is found in the cytoplasm. It carries out the reaction AMP + ATP = 2 ADP. The protein operates within purine metabolism; AMP biosynthesis via salvage pathway; AMP from ADP: step 1/1. In terms of biological role, catalyzes the reversible transfer of the terminal phosphate group between ATP and AMP. Plays an important role in cellular energy homeostasis and in adenine nucleotide metabolism. This Geobacillus thermodenitrificans (strain NG80-2) protein is Adenylate kinase.